Here is a 618-residue protein sequence, read N- to C-terminus: Proline--tRNA ligase (618 aa).

This sequence belongs to the class-II aminoacyl-tRNA synthetase family. ProS type 1 subfamily. As to quaternary structure, homodimer.

Its subcellular location is the cytoplasm. The catalysed reaction is tRNA(Pro) + L-proline + ATP = L-prolyl-tRNA(Pro) + AMP + diphosphate. Its function is as follows. Catalyzes the attachment of proline to tRNA(Pro) in a two-step reaction: proline is first activated by ATP to form Pro-AMP and then transferred to the acceptor end of tRNA(Pro). As ProRS can inadvertently accommodate and process non-cognate amino acids such as alanine and cysteine, to avoid such errors it has two additional distinct editing activities against alanine. One activity is designated as 'pretransfer' editing and involves the tRNA(Pro)-independent hydrolysis of activated Ala-AMP. The other activity is designated 'posttransfer' editing and involves deacylation of mischarged Ala-tRNA(Pro). The misacylated Cys-tRNA(Pro) is not edited by ProRS. The protein is Proline--tRNA ligase of Streptococcus pyogenes serotype M12 (strain MGAS2096).